Here is a 223-residue protein sequence, read N- to C-terminus: MOB-like protein phocein (223 aa).

Residues cysteine 92, cysteine 97, cysteine 110, histidine 113, cysteine 119, histidine 127, histidine 169, and histidine 174 each contribute to the Zn(2+) site.

It belongs to the MOB1/phocein family. In terms of assembly, part of the core of STRIPAK complexes composed of PP2A catalytic and scaffolding subunits, the striatins (PP2A regulatory subunits), the striatin-associated proteins MOB4, STRIP1 and STRIP2, PDCD10 and members of the STE20 kinases, such as STK24 and STK26.

It localises to the cytoplasm. Its subcellular location is the membrane. It is found in the golgi apparatus. The protein resides in the golgi stack membrane. Functionally, part of the striatin-interacting phosphatase and kinase (STRIPAK) complexes. STRIPAK complexes have critical roles in protein (de)phosphorylation and are regulators of multiple signaling pathways including Hippo, MAPK, nuclear receptor and cytoskeleton remodeling. Different types of STRIPAK complexes are involved in a variety of biological processes such as cell growth, differentiation, apoptosis, metabolism and immune regulation. The protein is MOB-like protein phocein (MOB4) of Gallus gallus (Chicken).